The following is a 412-amino-acid chain: GTPase Obg (412 aa).

Residues 1–159 (MKFLDQAKIF…RWIWLRLKMI (159 aa)) form the Obg domain. The OBG-type G domain occupies 160–327 (ADAGLVGLPN…ILARLFTHIR (168 aa)). GTP contacts are provided by residues 166–173 (GLPNAGKS), 191–195 (FTTLH), 212–215 (DIPG), 279–282 (NKCD), and 308–310 (SGV). Positions 173 and 193 each coordinate Mg(2+). Residues 335-412 (AVPAASPIFG…ADDEEDDAEE (78 aa)) form a disordered region. Residues 385-412 (NDGDEVDEDYDDEDLEEVADDEEDDAEE) are compositionally biased toward acidic residues.

It belongs to the TRAFAC class OBG-HflX-like GTPase superfamily. OBG GTPase family. Monomer. Mg(2+) serves as cofactor.

The protein resides in the cytoplasm. An essential GTPase which binds GTP, GDP and possibly (p)ppGpp with moderate affinity, with high nucleotide exchange rates and a fairly low GTP hydrolysis rate. Plays a role in control of the cell cycle, stress response, ribosome biogenesis and in those bacteria that undergo differentiation, in morphogenesis control. The polypeptide is GTPase Obg (Paramagnetospirillum magneticum (strain ATCC 700264 / AMB-1) (Magnetospirillum magneticum)).